We begin with the raw amino-acid sequence, 671 residues long: uncharacterized protein (671 aa).

Residues 39-56 traverse the membrane as a helical segment; the sequence is ATVTVVILLLILLLGWGY.

Its subcellular location is the membrane. This is an uncharacterized protein from Treponema pallidum (strain Nichols).